The primary structure comprises 198 residues: Holliday junction resolvase RecU (198 aa).

Mg(2+) contacts are provided by threonine 83, aspartate 85, glutamate 98, and glutamine 117.

This sequence belongs to the RecU family. It depends on Mg(2+) as a cofactor.

It localises to the cytoplasm. The enzyme catalyses Endonucleolytic cleavage at a junction such as a reciprocal single-stranded crossover between two homologous DNA duplexes (Holliday junction).. Endonuclease that resolves Holliday junction intermediates in genetic recombination. Cleaves mobile four-strand junctions by introducing symmetrical nicks in paired strands. Promotes annealing of linear ssDNA with homologous dsDNA. Required for DNA repair, homologous recombination and chromosome segregation. This Streptococcus thermophilus (strain CNRZ 1066) protein is Holliday junction resolvase RecU.